A 435-amino-acid polypeptide reads, in one-letter code: 5-methylthioadenosine/S-adenosylhomocysteine deaminase (435 aa).

Zn(2+) contacts are provided by H65 and H67. 3 residues coordinate substrate: E94, R150, and H189. Residue H216 participates in Zn(2+) binding. Substrate contacts are provided by E219 and D304. D304 provides a ligand contact to Zn(2+).

Belongs to the metallo-dependent hydrolases superfamily. MTA/SAH deaminase family. Requires Zn(2+) as cofactor.

It catalyses the reaction S-adenosyl-L-homocysteine + H2O + H(+) = S-inosyl-L-homocysteine + NH4(+). The catalysed reaction is S-methyl-5'-thioadenosine + H2O + H(+) = S-methyl-5'-thioinosine + NH4(+). Catalyzes the deamination of 5-methylthioadenosine and S-adenosyl-L-homocysteine into 5-methylthioinosine and S-inosyl-L-homocysteine, respectively. Is also able to deaminate adenosine. The protein is 5-methylthioadenosine/S-adenosylhomocysteine deaminase of Bacillus anthracis (strain A0248).